The following is a 463-amino-acid chain: ATP synthase subunit beta (463 aa).

152–159 (GGAGVGKT) contributes to the ATP binding site.

The protein belongs to the ATPase alpha/beta chains family. In terms of assembly, F-type ATPases have 2 components, CF(1) - the catalytic core - and CF(0) - the membrane proton channel. CF(1) has five subunits: alpha(3), beta(3), gamma(1), delta(1), epsilon(1). CF(0) has three main subunits: a(1), b(2) and c(9-12). The alpha and beta chains form an alternating ring which encloses part of the gamma chain. CF(1) is attached to CF(0) by a central stalk formed by the gamma and epsilon chains, while a peripheral stalk is formed by the delta and b chains.

The protein resides in the cell inner membrane. The enzyme catalyses ATP + H2O + 4 H(+)(in) = ADP + phosphate + 5 H(+)(out). Produces ATP from ADP in the presence of a proton gradient across the membrane. The catalytic sites are hosted primarily by the beta subunits. This chain is ATP synthase subunit beta, found in Shewanella oneidensis (strain ATCC 700550 / JCM 31522 / CIP 106686 / LMG 19005 / NCIMB 14063 / MR-1).